Consider the following 427-residue polypeptide: Beta-porphyranase D (427 aa).

The first 19 residues, 1-19, serve as a signal peptide directing secretion; the sequence is MILKQAILTLVLVNANLFA. Residues 23-45 are disordered; sequence PKTYSSTDKETRQGPPKPPMGKR. A GH16 domain is found at 32–308; the sequence is ETRQGPPKPP…WVRAYRLVDV (277 aa). The substrate site is built by tryptophan 73, arginine 76, glutamate 168, glutamate 173, and glutamate 272. Glutamate 168 (nucleophile) is an active-site residue. Residue glutamate 173 is the Proton donor of the active site.

The protein belongs to the glycosyl hydrolase 16 family.

It is found in the periplasm. The enzyme catalyses Hydrolysis of beta-D-galactopyranose-(1-&gt;4)-alpha-L-galactopyranose-6-sulfate linkages in porphyran.. Its function is as follows. Cleaves the sulfated polysaccharide porphyran at the (1-&gt;4) linkages between beta-D-galactopyranose and alpha-L-galactopyranose-6-sulfate, forming mostly the disaccharide alpha-L-galactopyranose-6-sulfate-(1-&gt;3)-beta-D-galactose. The protein is Beta-porphyranase D (porD) of Zobellia galactanivorans (strain DSM 12802 / CCUG 47099 / CIP 106680 / NCIMB 13871 / Dsij).